The following is a 193-amino-acid chain: dTTP/UTP pyrophosphatase (193 aa).

Asp77 serves as the catalytic Proton acceptor.

It belongs to the Maf family. YhdE subfamily. The cofactor is a divalent metal cation.

Its subcellular location is the cytoplasm. It carries out the reaction dTTP + H2O = dTMP + diphosphate + H(+). It catalyses the reaction UTP + H2O = UMP + diphosphate + H(+). Its function is as follows. Nucleoside triphosphate pyrophosphatase that hydrolyzes dTTP and UTP. May have a dual role in cell division arrest and in preventing the incorporation of modified nucleotides into cellular nucleic acids. This Phocaeicola vulgatus (strain ATCC 8482 / DSM 1447 / JCM 5826 / CCUG 4940 / NBRC 14291 / NCTC 11154) (Bacteroides vulgatus) protein is dTTP/UTP pyrophosphatase.